The chain runs to 515 residues: 2,3-bisphosphoglycerate-independent phosphoglycerate mutase (515 aa).

Mn(2+) contacts are provided by aspartate 14 and serine 64. The Phosphoserine intermediate role is filled by serine 64. Substrate-binding positions include histidine 125, 155–156 (RD), arginine 187, arginine 193, 263–266 (RADR), and lysine 337. Residues aspartate 404, histidine 408, aspartate 445, histidine 446, and histidine 464 each contribute to the Mn(2+) site.

This sequence belongs to the BPG-independent phosphoglycerate mutase family. In terms of assembly, monomer. Requires Mn(2+) as cofactor.

The enzyme catalyses (2R)-2-phosphoglycerate = (2R)-3-phosphoglycerate. Its pathway is carbohydrate degradation; glycolysis; pyruvate from D-glyceraldehyde 3-phosphate: step 3/5. Its function is as follows. Catalyzes the interconversion of 2-phosphoglycerate and 3-phosphoglycerate. The polypeptide is 2,3-bisphosphoglycerate-independent phosphoglycerate mutase (Yersinia pseudotuberculosis serotype I (strain IP32953)).